Reading from the N-terminus, the 416-residue chain is tRNA(Met) cytidine acetate ligase (416 aa).

ATP-binding positions include 7–20 (VAEY…HLYL), Gly102, Asn166, and Arg191.

Belongs to the TmcAL family.

The protein resides in the cytoplasm. It carries out the reaction cytidine(34) in elongator tRNA(Met) + acetate + ATP = N(4)-acetylcytidine(34) in elongator tRNA(Met) + AMP + diphosphate. Functionally, catalyzes the formation of N(4)-acetylcytidine (ac(4)C) at the wobble position of elongator tRNA(Met), using acetate and ATP as substrates. First activates an acetate ion to form acetyladenylate (Ac-AMP) and then transfers the acetyl group to tRNA to form ac(4)C34. The chain is tRNA(Met) cytidine acetate ligase from Syntrophomonas wolfei subsp. wolfei (strain DSM 2245B / Goettingen).